Reading from the N-terminus, the 532-residue chain is Membrane protein insertase YidC (532 aa).

The next 6 membrane-spanning stretches (helical) occupy residues 6–26 (IVLA…FAEY), 317–337 (AIDF…LTFF), 342–362 (GNWG…FWPL), 411–431 (GGCL…QALL), 451–473 (VWLA…GASM), and 496–516 (PIIF…YWLF).

It belongs to the OXA1/ALB3/YidC family. Type 1 subfamily. Interacts with the Sec translocase complex via SecD. Specifically interacts with transmembrane segments of nascent integral membrane proteins during membrane integration.

The protein resides in the cell membrane. Required for the insertion and/or proper folding and/or complex formation of integral membrane proteins into the membrane. Involved in integration of membrane proteins that insert both dependently and independently of the Sec translocase complex, as well as at least some lipoproteins. Aids folding of multispanning membrane proteins. The sequence is that of Membrane protein insertase YidC from Lawsonia intracellularis (strain PHE/MN1-00).